The sequence spans 326 residues: N-acetyl-gamma-glutamyl-phosphate reductase (326 aa).

The active site involves Cys155.

The protein belongs to the NAGSA dehydrogenase family. Type 1 subfamily.

The protein localises to the cytoplasm. It catalyses the reaction N-acetyl-L-glutamate 5-semialdehyde + phosphate + NADP(+) = N-acetyl-L-glutamyl 5-phosphate + NADPH + H(+). The protein operates within amino-acid biosynthesis; L-arginine biosynthesis; N(2)-acetyl-L-ornithine from L-glutamate: step 3/4. Functionally, catalyzes the NADPH-dependent reduction of N-acetyl-5-glutamyl phosphate to yield N-acetyl-L-glutamate 5-semialdehyde. This chain is N-acetyl-gamma-glutamyl-phosphate reductase, found in Shewanella baltica (strain OS223).